A 379-amino-acid polypeptide reads, in one-letter code: MSATLALTEQLIARASVTPDDQHCQQIMTERLTALGFECETIASHGVTNLWAVKRGTDGRDGKLLAFAGHTDVVPTGPLEQWSSPPFIPAHRDGKLYGRGAADMKTSLAAFVVASEEFVAAHPGHRGTIAFLITSDEEGPATDGTVKVVELLEARGERMDYCIVGEPTSTTELGDVVKNGRRGSMSGELVVKGVQGHIAYPHLAKNPIHLLAPALAELAAEQWDEGNEYFPPTTWQVSNLHAGTGASNVIPGHADLLFNFRFSTASTVEGLQARVHAILDKHGLEYTLKWSVSGLPFLTPRGELSGALENAIRTETGITTELSTTGGTSDGRFIARICPQVIEFGPPNGSIHKIDEHIEVRFVDPLKNVYRRVLEQLIA.

Position 70 (His70) interacts with Zn(2+). Asp72 is a catalytic residue. Asp103 is a Zn(2+) binding site. Glu137 functions as the Proton acceptor in the catalytic mechanism. The Zn(2+) site is built by Glu138, Glu166, and His352.

The protein belongs to the peptidase M20A family. DapE subfamily. Homodimer. It depends on Zn(2+) as a cofactor. Co(2+) serves as cofactor.

It catalyses the reaction N-succinyl-(2S,6S)-2,6-diaminopimelate + H2O = (2S,6S)-2,6-diaminopimelate + succinate. Its pathway is amino-acid biosynthesis; L-lysine biosynthesis via DAP pathway; LL-2,6-diaminopimelate from (S)-tetrahydrodipicolinate (succinylase route): step 3/3. Functionally, catalyzes the hydrolysis of N-succinyl-L,L-diaminopimelic acid (SDAP), forming succinate and LL-2,6-diaminopimelate (DAP), an intermediate involved in the bacterial biosynthesis of lysine and meso-diaminopimelic acid, an essential component of bacterial cell walls. The sequence is that of Succinyl-diaminopimelate desuccinylase from Burkholderia lata (strain ATCC 17760 / DSM 23089 / LMG 22485 / NCIMB 9086 / R18194 / 383).